A 444-amino-acid chain; its full sequence is Flagellum-specific ATP synthase (444 aa).

164–171 is an ATP binding site; sequence AGSGVGKS.

Belongs to the ATPase alpha/beta chains family.

It is found in the cytoplasm. The enzyme catalyses ATP + H2O + 4 H(+)(in) = ADP + phosphate + 5 H(+)(out). Functionally, probable catalytic subunit of a protein translocase for flagellum-specific export, or a proton translocase involved in local circuits at the flagellum. This Caulobacter vibrioides (strain ATCC 19089 / CIP 103742 / CB 15) (Caulobacter crescentus) protein is Flagellum-specific ATP synthase (fliI).